A 447-amino-acid chain; its full sequence is Phosphoglucosamine mutase (447 aa).

Residue serine 107 is the Phosphoserine intermediate of the active site. Mg(2+) contacts are provided by serine 107, aspartate 246, aspartate 248, and aspartate 250. Serine 107 bears the Phosphoserine mark.

It belongs to the phosphohexose mutase family. Mg(2+) is required as a cofactor. Activated by phosphorylation.

The catalysed reaction is alpha-D-glucosamine 1-phosphate = D-glucosamine 6-phosphate. Its function is as follows. Catalyzes the conversion of glucosamine-6-phosphate to glucosamine-1-phosphate. This Ralstonia nicotianae (strain ATCC BAA-1114 / GMI1000) (Ralstonia solanacearum) protein is Phosphoglucosamine mutase.